A 96-amino-acid polypeptide reads, in one-letter code: Co-chaperonin GroES 2 (96 aa).

It belongs to the GroES chaperonin family. As to quaternary structure, heptamer of 7 subunits arranged in a ring. Interacts with the chaperonin GroEL.

The protein localises to the cytoplasm. Together with the chaperonin GroEL, plays an essential role in assisting protein folding. The GroEL-GroES system forms a nano-cage that allows encapsulation of the non-native substrate proteins and provides a physical environment optimized to promote and accelerate protein folding. GroES binds to the apical surface of the GroEL ring, thereby capping the opening of the GroEL channel. In Vibrio cholerae serotype O1 (strain ATCC 39315 / El Tor Inaba N16961), this protein is Co-chaperonin GroES 2.